Consider the following 718-residue polypeptide: Cyclomaltodextrin glucanotransferase (718 aa).

The first 34 residues, 1 to 34 (MFQMAKRAFLSTTLTLGLLAGSALPFLPASAAYA), serve as a signal peptide directing secretion. The interval 35–172 (DPDIAVTNKQ…GIKIIIDFAP (138 aa)) is A1. Ca(2+) is bound by residues Asp-61, Asn-63, Asn-66, and Asn-67. Cys-77 and Cys-84 are disulfide-bonded. Ca(2+) is bound by residues Gly-85 and Asp-87. 134–135 (YW) lines the substrate pocket. Residue Asn-173 coordinates Ca(2+). The tract at residues 173 to 236 (NHTSPAMETD…NLYDLADFNH (64 aa)) is b. His-174 lines the substrate pocket. Residue Ile-224 participates in Ca(2+) binding. Residue 227-230 (NLYD) participates in substrate binding. Asp-233 contributes to the Ca(2+) binding site. An A2 region spans residues 237-440 (NNATIDKYFK…LRKSNPAIAY (204 aa)). Arg-261 lines the substrate pocket. The active-site Nucleophile is the Asp-263. Residue 266-267 (KH) coordinates substrate. Position 267 (His-267) interacts with Ca(2+). The Proton donor role is filled by Glu-291. Positions 361, 405, and 409 each coordinate substrate. The c stretch occupies residues 441 to 528 (GSTQQRWINN…ATAVWQYTAA (88 aa)). The d stretch occupies residues 529 to 614 (ETTPTIGHVG…SNAYNHFTIL (86 aa)). The IPT/TIG domain maps to 532–612 (PTIGHVGPVM…VNSNAYNHFT (81 aa)). A CBM20 domain is found at 613–718 (ILTGDQVTVR…GTATVTVNWQ (106 aa)). The interval 615–718 (TGDQVTVRFV…GTATVTVNWQ (104 aa)) is e.

The protein belongs to the glycosyl hydrolase 13 family. In terms of assembly, monomer. Requires Ca(2+) as cofactor.

The protein localises to the secreted. The enzyme catalyses Cyclizes part of a (1-&gt;4)-alpha-D-glucan chain by formation of a (1-&gt;4)-alpha-D-glucosidic bond.. This Bacillus sp. (strain 6.6.3) protein is Cyclomaltodextrin glucanotransferase (cgt).